We begin with the raw amino-acid sequence, 393 residues long: MPLKSHEFTSESVAEGHPDKVADQISDAIVDLFLSKDPTSKVAVETLCTTNRVVLAGEVRTNNGSVVTPDEMNAAARAVVKKIGYEQDGFHWEKMAVENHVHGQSAEIAQGVEEGQGLFKEEGAGDQGIMFGYATDETPELMPATLVYSHQILQKLAELRHSGKNPQLEPDAKSQVTLQYEGSRPVGVNAVVVSHQHKAGVSQEELREVIRPVVKAVLPEGWFPPEEKFYVNPTGSFVIGGPDGDCGLTGRKIIVDTYGGAAPHGGGAFSGKDPSKVDRSAAYATRYLAKNIVAAGLATRCTIQVSYAIGVAQPLSIYVDTHGTGQADEARIAKAVRELFDLSPKGIRTHLKLSNPIYGPTAAYGHFGRIPGEGGTFTWEKTDLAGELKRLVN.

An ATP-binding site is contributed by histidine 17. Aspartate 19 lines the Mg(2+) pocket. Glutamate 45 is a binding site for K(+). The L-methionine site is built by glutamate 58 and glutamine 104. Residues 104–114 (QSAEIAQGVEE) are flexible loop. ATP-binding positions include 171 to 173 (DAK), aspartate 245, 251 to 252 (RK), alanine 268, and lysine 272. Residue aspartate 245 coordinates L-methionine. Lysine 276 lines the L-methionine pocket.

It belongs to the AdoMet synthase family. As to quaternary structure, homotetramer; dimer of dimers. It depends on Mg(2+) as a cofactor. K(+) is required as a cofactor.

Its subcellular location is the cytoplasm. The enzyme catalyses L-methionine + ATP + H2O = S-adenosyl-L-methionine + phosphate + diphosphate. The protein operates within amino-acid biosynthesis; S-adenosyl-L-methionine biosynthesis; S-adenosyl-L-methionine from L-methionine: step 1/1. Functionally, catalyzes the formation of S-adenosylmethionine (AdoMet) from methionine and ATP. The overall synthetic reaction is composed of two sequential steps, AdoMet formation and the subsequent tripolyphosphate hydrolysis which occurs prior to release of AdoMet from the enzyme. This Hyphomonas neptunium (strain ATCC 15444) protein is S-adenosylmethionine synthase.